Here is a 210-residue protein sequence, read N- to C-terminus: Outer-membrane lipoprotein carrier protein (210 aa).

The signal sequence occupies residues 1–22 (MRAFKWALAIGATLALPLTAQA).

The protein belongs to the LolA family. Monomer.

The protein resides in the periplasm. In terms of biological role, participates in the translocation of lipoproteins from the inner membrane to the outer membrane. Only forms a complex with a lipoprotein if the residue after the N-terminal Cys is not an aspartate (The Asp acts as a targeting signal to indicate that the lipoprotein should stay in the inner membrane). The polypeptide is Outer-membrane lipoprotein carrier protein (Chromohalobacter salexigens (strain ATCC BAA-138 / DSM 3043 / CIP 106854 / NCIMB 13768 / 1H11)).